Consider the following 517-residue polypeptide: 2,3-bisphosphoglycerate-independent phosphoglycerate mutase 1 (517 aa).

The Mn(2+) site is built by Asp-17 and Ser-67. Ser-67 (phosphoserine intermediate) is an active-site residue. Residues His-128, Arg-158 to Asp-159, Arg-190, Arg-196, Arg-267 to Arg-270, and Lys-340 each bind substrate. Residues Asp-407, His-411, Asp-448, His-449, and His-467 each contribute to the Mn(2+) site.

It belongs to the BPG-independent phosphoglycerate mutase family. The cofactor is Mn(2+).

It catalyses the reaction (2R)-2-phosphoglycerate = (2R)-3-phosphoglycerate. It participates in carbohydrate degradation; glycolysis; pyruvate from D-glyceraldehyde 3-phosphate: step 3/5. In terms of biological role, catalyzes the interconversion of 2-phosphoglycerate and 3-phosphoglycerate. This chain is 2,3-bisphosphoglycerate-independent phosphoglycerate mutase 1, found in Methanosarcina barkeri (strain Fusaro / DSM 804).